Reading from the N-terminus, the 501-residue chain is ATP synthase subunit beta (501 aa).

153–160 (GGAGVGKT) provides a ligand contact to ATP.

This sequence belongs to the ATPase alpha/beta chains family. In terms of assembly, F-type ATPases have 2 components, CF(1) - the catalytic core - and CF(0) - the membrane proton channel. CF(1) has five subunits: alpha(3), beta(3), gamma(1), delta(1), epsilon(1). CF(0) has three main subunits: a(1), b(2) and c(9-12). The alpha and beta chains form an alternating ring which encloses part of the gamma chain. CF(1) is attached to CF(0) by a central stalk formed by the gamma and epsilon chains, while a peripheral stalk is formed by the delta and b chains.

The protein resides in the cell inner membrane. It catalyses the reaction ATP + H2O + 4 H(+)(in) = ADP + phosphate + 5 H(+)(out). Its function is as follows. Produces ATP from ADP in the presence of a proton gradient across the membrane. The catalytic sites are hosted primarily by the beta subunits. The polypeptide is ATP synthase subunit beta (Cytophaga hutchinsonii (strain ATCC 33406 / DSM 1761 / CIP 103989 / NBRC 15051 / NCIMB 9469 / D465)).